Reading from the N-terminus, the 245-residue chain is UPF0246 protein Cgl1995/cg2186 (245 aa).

This sequence belongs to the UPF0246 family.

The chain is UPF0246 protein Cgl1995/cg2186 from Corynebacterium glutamicum (strain ATCC 13032 / DSM 20300 / JCM 1318 / BCRC 11384 / CCUG 27702 / LMG 3730 / NBRC 12168 / NCIMB 10025 / NRRL B-2784 / 534).